Here is a 323-residue protein sequence, read N- to C-terminus: MYQPPDAGHWTGRIDSVKDERAFRLHQRIRLLDLSQPLETAAERAAAFIGFACDEGVRRNQGRQGAKEAPAAVKAALARLPWHLPEGVVVYDAGDVVCIDERLEQSQTELGKAVARLLKNGMASIVIGGGHETAYGHYLGVREALGTDARLGILNIDAHFDLRPYDDGPTSGTMFRQILDQDDQVSYFCLGIQRLGNTAALFADAETYRCRYMLEDELTAGPIEAAYEQIEKFAADHDAVMLTFCMDAISAAAAPGVSAPSPFGLAPSLARALIRRIVSHPKTISVDLCEVNPLLDEGGKTVALAAAFCMEALLHFQRLQPRR.

Mn(2+) is bound by residues H131, D157, H159, D161, C245, and D247.

This sequence belongs to the arginase family. The cofactor is Mn(2+).

The catalysed reaction is N-formimidoyl-L-glutamate + H2O = formamide + L-glutamate. It participates in amino-acid degradation; L-histidine degradation into L-glutamate; L-glutamate from N-formimidoyl-L-glutamate (hydrolase route): step 1/1. Functionally, catalyzes the conversion of N-formimidoyl-L-glutamate to L-glutamate and formamide. In Geobacillus kaustophilus (strain HTA426), this protein is Formimidoylglutamase.